The chain runs to 951 residues: Valine--tRNA ligase (951 aa).

The short motif at 42–52 (PNVTGSLHMGH) is the 'HIGH' region element. A 'KMSKS' region motif is present at residues 554–558 (KMSKS). Lys557 contacts ATP. A coiled-coil region spans residues 880–944 (AGLINKEDEL…AEAKAKLIEQ (65 aa)).

Belongs to the class-I aminoacyl-tRNA synthetase family. ValS type 1 subfamily. In terms of assembly, monomer.

The protein localises to the cytoplasm. The catalysed reaction is tRNA(Val) + L-valine + ATP = L-valyl-tRNA(Val) + AMP + diphosphate. In terms of biological role, catalyzes the attachment of valine to tRNA(Val). As ValRS can inadvertently accommodate and process structurally similar amino acids such as threonine, to avoid such errors, it has a 'posttransfer' editing activity that hydrolyzes mischarged Thr-tRNA(Val) in a tRNA-dependent manner. In Salmonella paratyphi A (strain ATCC 9150 / SARB42), this protein is Valine--tRNA ligase.